The following is a 129-amino-acid chain: NADH-quinone oxidoreductase subunit A (129 aa).

The next 3 helical transmembrane spans lie at 9–29 (FPIG…LGLA), 68–88 (LLFI…VLLL), and 97–117 (LGWP…AGLV).

The protein belongs to the complex I subunit 3 family. In terms of assembly, NDH-1 is composed of 14 different subunits. Subunits NuoA, H, J, K, L, M, N constitute the membrane sector of the complex.

The protein localises to the cell inner membrane. The catalysed reaction is a quinone + NADH + 5 H(+)(in) = a quinol + NAD(+) + 4 H(+)(out). NDH-1 shuttles electrons from NADH, via FMN and iron-sulfur (Fe-S) centers, to quinones in the respiratory chain. The immediate electron acceptor for the enzyme in this species is believed to be ubiquinone. Couples the redox reaction to proton translocation (for every two electrons transferred, four hydrogen ions are translocated across the cytoplasmic membrane), and thus conserves the redox energy in a proton gradient. In Anaeromyxobacter sp. (strain K), this protein is NADH-quinone oxidoreductase subunit A.